The chain runs to 466 residues: 3-isopropylmalate dehydratase large subunit (466 aa).

[4Fe-4S] cluster is bound by residues C347, C407, and C410.

The protein belongs to the aconitase/IPM isomerase family. LeuC type 1 subfamily. In terms of assembly, heterodimer of LeuC and LeuD. [4Fe-4S] cluster is required as a cofactor.

It carries out the reaction (2R,3S)-3-isopropylmalate = (2S)-2-isopropylmalate. It participates in amino-acid biosynthesis; L-leucine biosynthesis; L-leucine from 3-methyl-2-oxobutanoate: step 2/4. Its function is as follows. Catalyzes the isomerization between 2-isopropylmalate and 3-isopropylmalate, via the formation of 2-isopropylmaleate. The chain is 3-isopropylmalate dehydratase large subunit from Shigella sonnei (strain Ss046).